The sequence spans 86 residues: Large ribosomal subunit protein eL43 (86 aa).

The Zn(2+) site is built by Cys-40, Cys-43, Cys-58, and Cys-61. A C4-type zinc finger spans residues 40–61; sequence CPFCRSKAVIREAYGIYRCKKC.

It belongs to the eukaryotic ribosomal protein eL43 family. Putative zinc-binding subfamily. In terms of assembly, part of the 50S ribosomal subunit. Requires Zn(2+) as cofactor.

Functionally, binds to the 23S rRNA. The chain is Large ribosomal subunit protein eL43 from Nanoarchaeum equitans (strain Kin4-M).